The following is a 23-amino-acid chain: SV40 early leader protein (23 aa).

Residues 1–23 (MQRPRPPRPLSYSRSSEEAFLEA) are disordered.

The protein belongs to the polyomavirus early leader protein family.

May play a role in the lytic cycle. The polypeptide is SV40 early leader protein (Macaca (macaques)).